A 61-amino-acid polypeptide reads, in one-letter code: MAKLAITLTRSTIGRPEGQRVTVRTLGLRKMHQTVVVPDNVAMRGMINKVSHLVTVKEINE.

Belongs to the universal ribosomal protein uL30 family. As to quaternary structure, part of the 50S ribosomal subunit.

The protein is Large ribosomal subunit protein uL30 of Exiguobacterium sp. (strain ATCC BAA-1283 / AT1b).